Consider the following 940-residue polypeptide: DNA gyrase subunit A (940 aa).

A disordered region spans residues 1–22; the sequence is MSDHTNPPSAPPDDDPNGGSLL. Positions 48–538 constitute a Topo IIA-type catalytic domain; it reads LPDARDGLKP…SLADQDDESL (491 aa). The active-site O-(5'-phospho-DNA)-tyrosine intermediate is the tyrosine 136. Residues 565-571 carry the GyrA-box motif; that stretch reads QHRGGRG. Residues 914-924 are compositionally biased toward acidic residues; that stretch reads ESVDDNGDDAD. The disordered stretch occupies residues 914–940; that stretch reads ESVDDNGDDADSVAPAAPDGQVTDSDD.

It belongs to the type II topoisomerase GyrA/ParC subunit family. As to quaternary structure, heterotetramer, composed of two GyrA and two GyrB chains. In the heterotetramer, GyrA contains the active site tyrosine that forms a transient covalent intermediate with DNA, while GyrB binds cofactors and catalyzes ATP hydrolysis.

It is found in the cytoplasm. The enzyme catalyses ATP-dependent breakage, passage and rejoining of double-stranded DNA.. In terms of biological role, a type II topoisomerase that negatively supercoils closed circular double-stranded (ds) DNA in an ATP-dependent manner to modulate DNA topology and maintain chromosomes in an underwound state. Negative supercoiling favors strand separation, and DNA replication, transcription, recombination and repair, all of which involve strand separation. Also able to catalyze the interconversion of other topological isomers of dsDNA rings, including catenanes and knotted rings. Type II topoisomerases break and join 2 DNA strands simultaneously in an ATP-dependent manner. The sequence is that of DNA gyrase subunit A from Granulibacter bethesdensis (strain ATCC BAA-1260 / CGDNIH1).